We begin with the raw amino-acid sequence, 470 residues long: Choline/ethanolamine transporter flvcr2a (470 aa).

The Cytoplasmic portion of the chain corresponds to 1 to 23; sequence MCDKADNHIDVQPEGNLEVSSVS. A helical membrane pass occupies residues 24 to 48; that stretch reads STRLYRRRWVILLLFSSYSLCNAFQ. Choline is bound by residues N45, A46, and W49. At 49 to 66 the chain is on the extracellular side; the sequence is WIQYGIINNIFMKFYQVS. Residues 67–94 form a helical membrane-spanning segment; the sequence is SFAVDWLSMVYMLTYIPFIFPVTWLLER. Topologically, residues 95–96 are cytoplasmic; it reads KG. Residues 97 to 116 traverse the membrane as a helical segment; it reads LRVVALLAASINCAGTWIKV. The Extracellular portion of the chain corresponds to 117–123; that stretch reads ASVQPSL. A helical membrane pass occupies residues 124–152; that stretch reads FWVTMLGQFACSCAQVFILGMPSQVASVW. 2 residues coordinate choline: Q138 and L142. At 153-157 the chain is on the cytoplasmic side; sequence FGSDE. Residues 158–183 traverse the membrane as a helical segment; it reads VSTACAIGVFGNQLGIAIGFLVPPVL. The Extracellular portion of the chain corresponds to 184–188; that stretch reads VPNVE. A helical transmembrane segment spans residues 189-218; that stretch reads DMGELAEHISIMFYITAAVATLIFLLVVFV. The Cytoplasmic portion of the chain corresponds to 219–254; the sequence is FQEKPETPPSLAQVALRNMPTGQHSYLASIARLMCN. A helical membrane pass occupies residues 255 to 285; sequence KPFILLLISYGLNVGSFYAVSTLLNRMIIEH. Y272 contributes to the choline binding site. Residues 286-289 are Extracellular-facing; that stretch reads YPGE. A helical membrane pass occupies residues 290 to 318; sequence EVNAGRIGLTLVVAGVVGSLICGVWLDKT. At 319–320 the chain is on the cytoplasmic side; the sequence is KT. The chain crosses the membrane as a helical span at residues 321 to 343; sequence YKQTTLSVYLLSFVGMLIYSFTL. Residues 344–346 lie on the Extracellular side of the membrane; that stretch reads NLG. Residues 347–376 traverse the membrane as a helical segment; the sequence is HLWLVFLTSGVLGFFMTGYLPLGFEFAVEL. The Cytoplasmic segment spans residues 377 to 384; that stretch reads TYPESEGT. The helical transmembrane segment at 385–410 threads the bilayer; the sequence is SSGLLNCSAQVFGIAFTIIQGKIIDH. Q394 provides a ligand contact to choline. Residues 411–412 lie on the Extracellular side of the membrane; it reads FG. Residues 413–435 form a helical membrane-spanning segment; the sequence is TLAGNIFLCVFLLIGSIMTAFIK. Topologically, residues 436–470 are cytoplasmic; that stretch reads SDLRRQKANQETGGNADSSVHPQHGETLPVKEVKM. Residues 445-456 show a composition bias toward polar residues; that stretch reads QETGGNADSSVH. The interval 445–470 is disordered; sequence QETGGNADSSVHPQHGETLPVKEVKM.

This sequence belongs to the major facilitator superfamily. Feline leukemia virus subgroup C receptor (TC 2.A.1.28.1) family.

It is found in the cell membrane. Its subcellular location is the mitochondrion membrane. The protein localises to the endoplasmic reticulum membrane. It catalyses the reaction choline(out) = choline(in). It carries out the reaction ethanolamine(in) = ethanolamine(out). The enzyme catalyses heme b(in) = heme b(out). In terms of biological role, choline uniporter that specifically mediates choline uptake at the blood-brain-barrier. Responsible for the majority of choline uptake across the blood-brain-barrier from the circulation into the brain. Choline, a nutrient critical for brain development, is a precursor of phosphatidylcholine, as well as betaine. Also mediates transport of ethanolamine. Choline and ethanolamine transport is not coupled with proton transport and is exclusively driven by the choline gradient across the plasma membrane. Also acts as a heme b transporter. The sequence is that of Choline/ethanolamine transporter flvcr2a from Danio rerio (Zebrafish).